The primary structure comprises 146 residues: Ataxin-7-like protein 1 (146 aa).

Disordered stretches follow at residues 1–27 (MTSE…QEGT) and 125–146 (KRNA…QRQV). The span at 127–138 (NASISWSGAESR) shows a compositional bias: polar residues.

This chain is Ataxin-7-like protein 1 (Atxn7l1), found in Mus musculus (Mouse).